The chain runs to 165 residues: Transcription elongation factor GreA (165 aa).

Positions 55–78 (AAKEEQGKQELRVRQLTQLLESAK) form a coiled coil.

It belongs to the GreA/GreB family.

Functionally, necessary for efficient RNA polymerase transcription elongation past template-encoded arresting sites. The arresting sites in DNA have the property of trapping a certain fraction of elongating RNA polymerases that pass through, resulting in locked ternary complexes. Cleavage of the nascent transcript by cleavage factors such as GreA or GreB allows the resumption of elongation from the new 3'terminus. GreA releases sequences of 2 to 3 nucleotides. The sequence is that of Transcription elongation factor GreA from Streptomyces coelicolor (strain ATCC BAA-471 / A3(2) / M145).